A 261-amino-acid chain; its full sequence is Proteasome assembly chaperone 2 (261 aa).

This sequence belongs to the PSMG2 family. Forms a heterodimer with psmg1. In terms of processing, degraded by the proteasome upon completion of 20S proteasome maturation.

The protein localises to the nucleus. Its function is as follows. Chaperone protein which promotes assembly of the 20S proteasome as part of a heterodimer with psmg1. This chain is Proteasome assembly chaperone 2, found in Xenopus tropicalis (Western clawed frog).